Reading from the N-terminus, the 189-residue chain is ATP synthase subunit delta (189 aa).

Belongs to the ATPase delta chain family. In terms of assembly, F-type ATPases have 2 components, F(1) - the catalytic core - and F(0) - the membrane proton channel. F(1) has five subunits: alpha(3), beta(3), gamma(1), delta(1), epsilon(1). F(0) has three main subunits: a(1), b(2) and c(10-14). The alpha and beta chains form an alternating ring which encloses part of the gamma chain. F(1) is attached to F(0) by a central stalk formed by the gamma and epsilon chains, while a peripheral stalk is formed by the delta and b chains.

It localises to the cell inner membrane. Its function is as follows. F(1)F(0) ATP synthase produces ATP from ADP in the presence of a proton or sodium gradient. F-type ATPases consist of two structural domains, F(1) containing the extramembraneous catalytic core and F(0) containing the membrane proton channel, linked together by a central stalk and a peripheral stalk. During catalysis, ATP synthesis in the catalytic domain of F(1) is coupled via a rotary mechanism of the central stalk subunits to proton translocation. Functionally, this protein is part of the stalk that links CF(0) to CF(1). It either transmits conformational changes from CF(0) to CF(1) or is implicated in proton conduction. This is ATP synthase subunit delta from Methylorubrum extorquens (strain CM4 / NCIMB 13688) (Methylobacterium extorquens).